Consider the following 1172-residue polypeptide: Lysylphosphatidylglycerol biosynthesis bifunctional protein LysX (1172 aa).

Residues 1-34 (MGLHLTVPGLRRDGRGVQSNSHDTSSKTTADISR) form a disordered region. The phosphatidylglycerol lysyltransferase stretch occupies residues 1 to 663 (MGLHLTVPGL…LLHHDGSAPD (663 aa)). Positions 17-31 (VQSNSHDTSSKTTAD) are enriched in polar residues. 7 helical membrane-spanning segments follow: residues 80–100 (VPAA…LASV), 122–142 (FPDT…ALTA), 146–166 (IAWL…AAEI), 177–197 (FGEN…VLGY), 214–234 (AVWL…VELF), 272–292 (AIFG…LFLS), and 612–632 (VIPR…LPFS). The interval 664–1172 (VSGLRQVGLT…TLPFPLAKPH (509 aa)) is lysine--tRNA ligase. Positions 726–804 (VSVSGRIMRI…SLIVSGWRLI (79 aa)) form a DNA-binding region, OB. Mg(2+)-binding residues include aspartate 1084 and glutamate 1091.

It in the N-terminal section; belongs to the LPG synthetase family. In the C-terminal section; belongs to the class-II aminoacyl-tRNA synthetase family. The cofactor is Mg(2+).

The protein resides in the cell membrane. It carries out the reaction tRNA(Lys) + L-lysine + ATP = L-lysyl-tRNA(Lys) + AMP + diphosphate. It catalyses the reaction L-lysyl-tRNA(Lys) + a 1,2-diacyl-sn-glycero-3-phospho-(1'-sn-glycerol) = a 1,2-diacyl-sn-glycero-3-phospho-1'-(3'-O-L-lysyl)-sn-glycerol + tRNA(Lys). Its function is as follows. Catalyzes the production of L-lysyl-tRNA(Lys)transfer and the transfer of a lysyl group from L-lysyl-tRNA(Lys) to membrane-bound phosphatidylglycerol (PG), which produces lysylphosphatidylglycerol (LPG), one of the components of the bacterial membrane with a positive net charge. LPG synthesis contributes to the resistance to cationic antimicrobial peptides (CAMPs) and likely protects M.tuberculosis against the CAMPs produced by competiting microorganisms (bacteriocins). In fact, the modification of anionic phosphatidylglycerol with positively charged L-lysine results in repulsion of the peptides. The sequence is that of Lysylphosphatidylglycerol biosynthesis bifunctional protein LysX (lysX) from Mycobacterium bovis (strain ATCC BAA-935 / AF2122/97).